Reading from the N-terminus, the 486-residue chain is Malonate-semialdehyde dehydrogenase 1 (486 aa).

F154, K178, E181, R182, and S231 together coordinate NAD(+). C286 (nucleophile) is an active-site residue. E386 is an NAD(+) binding site.

The protein belongs to the aldehyde dehydrogenase family. IolA subfamily. As to quaternary structure, homotetramer.

It carries out the reaction 3-oxopropanoate + NAD(+) + CoA + H2O = hydrogencarbonate + acetyl-CoA + NADH + H(+). It catalyses the reaction 2-methyl-3-oxopropanoate + NAD(+) + CoA + H2O = propanoyl-CoA + hydrogencarbonate + NADH + H(+). Its pathway is polyol metabolism; myo-inositol degradation into acetyl-CoA; acetyl-CoA from myo-inositol: step 7/7. Its function is as follows. Catalyzes the oxidation of malonate semialdehyde (MSA) and methylmalonate semialdehyde (MMSA) into acetyl-CoA and propanoyl-CoA, respectively. Is involved in a myo-inositol catabolic pathway. Bicarbonate, and not CO2, is the end-product of the enzymatic reaction. The protein is Malonate-semialdehyde dehydrogenase 1 of Oceanobacillus iheyensis (strain DSM 14371 / CIP 107618 / JCM 11309 / KCTC 3954 / HTE831).